The sequence spans 303 residues: Digeranylgeranylglyceryl phosphate synthase (303 aa).

7 consecutive transmembrane segments (helical) span residues 23–43, 88–108, 130–150, 164–184, 206–228, 232–254, and 272–292; these read VLGV…AAIA, LALA…PLTG, LPGN…GSLA, TIPI…VKGV, FALR…AAPL, GYAF…AACL, and VAMF…PVFY.

The protein belongs to the UbiA prenyltransferase family. DGGGP synthase subfamily. It depends on Mg(2+) as a cofactor.

The protein resides in the cell membrane. The catalysed reaction is sn-3-O-(geranylgeranyl)glycerol 1-phosphate + (2E,6E,10E)-geranylgeranyl diphosphate = 2,3-bis-O-(geranylgeranyl)-sn-glycerol 1-phosphate + diphosphate. Its pathway is membrane lipid metabolism; glycerophospholipid metabolism. Prenyltransferase that catalyzes the transfer of the geranylgeranyl moiety of geranylgeranyl diphosphate (GGPP) to the C2 hydroxyl of (S)-3-O-geranylgeranylglyceryl phosphate (GGGP). This reaction is the second ether-bond-formation step in the biosynthesis of archaeal membrane lipids. This Ignicoccus hospitalis (strain KIN4/I / DSM 18386 / JCM 14125) protein is Digeranylgeranylglyceryl phosphate synthase.